The sequence spans 156 residues: Small ribosomal subunit protein uS7 (156 aa).

Belongs to the universal ribosomal protein uS7 family. As to quaternary structure, part of the 30S ribosomal subunit. Contacts proteins S9 and S11.

One of the primary rRNA binding proteins, it binds directly to 16S rRNA where it nucleates assembly of the head domain of the 30S subunit. Is located at the subunit interface close to the decoding center, probably blocks exit of the E-site tRNA. This Shewanella sp. (strain W3-18-1) protein is Small ribosomal subunit protein uS7.